The chain runs to 120 residues: UPF0231 protein YacL (120 aa).

Belongs to the UPF0231 family.

This is UPF0231 protein YacL from Escherichia fergusonii (strain ATCC 35469 / DSM 13698 / CCUG 18766 / IAM 14443 / JCM 21226 / LMG 7866 / NBRC 102419 / NCTC 12128 / CDC 0568-73).